Here is a 642-residue protein sequence, read N- to C-terminus: Conserved oligomeric Golgi complex subunit 6 (642 aa).

Belongs to the COG6 family. As to quaternary structure, component of the conserved oligomeric Golgi complex which is composed of eight different subunits and is required for normal Golgi morphology and localization.

It localises to the golgi apparatus membrane. Required for normal Golgi function. The protein is Conserved oligomeric Golgi complex subunit 6 (cogc-6) of Caenorhabditis elegans.